The sequence spans 307 residues: Ribosomal protein L11 methyltransferase (307 aa).

Residues Thr-162, Gly-183, Asp-205, and Asn-244 each coordinate S-adenosyl-L-methionine.

It belongs to the methyltransferase superfamily. PrmA family.

Its subcellular location is the cytoplasm. It carries out the reaction L-lysyl-[protein] + 3 S-adenosyl-L-methionine = N(6),N(6),N(6)-trimethyl-L-lysyl-[protein] + 3 S-adenosyl-L-homocysteine + 3 H(+). Its function is as follows. Methylates ribosomal protein L11. In Bordetella bronchiseptica (strain ATCC BAA-588 / NCTC 13252 / RB50) (Alcaligenes bronchisepticus), this protein is Ribosomal protein L11 methyltransferase.